Here is a 116-residue protein sequence, read N- to C-terminus: MKGPSVLAVTAVVLLLVLSALENSSGAPQRLSEKRNWTPQAMLYLKGAQGRRFLSDQSRRKELADRPPPERRNPDLELLTLPEAAALFLASLEKSQKDEGGNFDKSELLEDRLFNW.

An N-terminal signal peptide occupies residues 1–26 (MKGPSVLAVTAVVLLLVLSALENSSG). Residues 27–35 (APQRLSEKR) constitute a propeptide that is removed on maturation. Glutamine 49 carries the post-translational modification Glutamine amide. 2 consecutive propeptides follow at residues 50–116 (GRRF…LFNW) and 74–116 (PDLE…LFNW). Positions 52 to 77 (RFLSDQSRRKELADRPPPERRNPDLE) are disordered. The span at 53 to 75 (FLSDQSRRKELADRPPPERRNPD) shows a compositional bias: basic and acidic residues.

The protein belongs to the spexin family.

The protein resides in the secreted. The protein localises to the extracellular space. It localises to the cytoplasmic vesicle. It is found in the secretory vesicle. Its function is as follows. Plays a role as a central modulator of cardiovascular and renal function and nociception. Also plays a role in energy metabolism and storage. Inhibits adrenocortical cell proliferation with minor stimulation on corticosteroid release. Functionally, acts as a ligand for galanin receptors GALR2 and GALR3. Intracerebroventricular administration of the peptide induces an increase in arterial blood pressure, a decrease in both heart rate and renal excretion and delayed natriuresis. Intraventricular administration of the peptide induces antinociceptive activity. Also induces contraction of muscarinic-like stomach smooth muscles. Intraperitoneal administration of the peptide induces a reduction in food consumption and body weight. Inhibits long chain fatty acid uptake into adipocytes. In terms of biological role, intracerebroventricular administration of the peptide induces a decrease in heart rate, but no change in arterial pressure, and an increase in urine flow rate. Intraventricular administration of the peptide induces antinociceptive activity. In Mus musculus (Mouse), this protein is Spexin (Spx).